Here is a 120-residue protein sequence, read N- to C-terminus: Large ribosomal subunit protein uL14 (120 aa).

The protein belongs to the universal ribosomal protein uL14 family. As to quaternary structure, part of the 50S ribosomal subunit. Forms a cluster with proteins L3 and L19. In the 70S ribosome, L14 and L19 interact and together make contacts with the 16S rRNA in bridges B5 and B8.

In terms of biological role, binds to 23S rRNA. Forms part of two intersubunit bridges in the 70S ribosome. The sequence is that of Large ribosomal subunit protein uL14 from Karelsulcia muelleri (strain GWSS) (Sulcia muelleri).